Consider the following 475-residue polypeptide: Adenylyl cyclase-associated protein 1 (475 aa).

At alanine 2 the chain carries N-acetylalanine. Phosphotyrosine is present on tyrosine 31. Position 34 is a phosphoserine (serine 34). Lysine 81 carries the N6-acetyllysine modification. 2 disordered regions span residues 216-237 (ELSGLPSGPSAGSCPPPPPPCP) and 278-319 (MKTH…KKEP). Over residues 218–228 (SGLPSGPSAGS) the composition is skewed to low complexity. Residue lysine 287 is modified to N6-methyllysine. Phosphoserine occurs at positions 290, 295, and 301. Threonine 307 carries the post-translational modification Phosphothreonine. 2 positions are modified to phosphoserine: serine 308 and serine 310. Residues 319–453 (PAVLELEGKK…EGGDFNEFPV (135 aa)) enclose the C-CAP/cofactor C-like domain. Lysine 348 participates in a covalent cross-link: Glycyl lysine isopeptide (Lys-Gly) (interchain with G-Cter in SUMO1).

Belongs to the CAP family. Homodimer. Binds actin monomers.

It localises to the cell membrane. Functionally, directly regulates filament dynamics and has been implicated in a number of complex developmental and morphological processes, including mRNA localization and the establishment of cell polarity. The chain is Adenylyl cyclase-associated protein 1 (CAP1) from Homo sapiens (Human).